Here is a 323-residue protein sequence, read N- to C-terminus: DNA-directed RNA polymerase subunit alpha 1 (323 aa).

The alpha N-terminal domain (alpha-NTD) stretch occupies residues Met1–Arg228. Residues Ile244–Lys323 are alpha C-terminal domain (alpha-CTD).

It belongs to the RNA polymerase alpha chain family. In terms of assembly, homodimer. The RNAP catalytic core consists of 2 alpha, 1 beta, 1 beta' and 1 omega subunit. When a sigma factor is associated with the core the holoenzyme is formed, which can initiate transcription.

The catalysed reaction is RNA(n) + a ribonucleoside 5'-triphosphate = RNA(n+1) + diphosphate. Functionally, DNA-dependent RNA polymerase catalyzes the transcription of DNA into RNA using the four ribonucleoside triphosphates as substrates. This is DNA-directed RNA polymerase subunit alpha 1 from Francisella tularensis subsp. novicida (strain U112).